Here is a 226-residue protein sequence, read N- to C-terminus: Protein FATTY ACID EXPORT 1, chloroplastic (226 aa).

The N-terminal 39 residues, 1–39 (MASQISQLACFSSTNRQFHFQSRSFPCPMIRPQSFVVKS), are a transit peptide targeting the chloroplast. The disordered stretch occupies residues 66–87 (SKPYSTVDETATNKESITEPVE). Residues 67-80 (KPYSTVDETATNKE) are compositionally biased toward polar residues. Transmembrane regions (helical) follow at residues 130–150 (LSTG…SLKI), 158–178 (FPYI…NFTA), and 186–206 (FPAG…SYVV).

This sequence belongs to the TMEM14 family. In terms of tissue distribution, expressed in cotyledons, leaves, sepals and pollen.

The protein resides in the plastid. The protein localises to the chloroplast inner membrane. In terms of biological role, mediates the export of free fatty acid from the plastids. Potentially prefers palmitic acid (C16:0) over oleic acid (C18:1) and stearic acid (C18:0). Not involved in fatty acid activation. Required for biogenesis of the outer pollen cell wall, in particular for the assembly of exine and pollen coat and for the release of ketone wax components. The polypeptide is Protein FATTY ACID EXPORT 1, chloroplastic (Arabidopsis thaliana (Mouse-ear cress)).